Consider the following 183-residue polypeptide: uncharacterized protein (183 aa).

Positions 27 to 170 constitute an SIS domain; sequence MIKLIDSARS…VAEIMMQKHL (144 aa).

This sequence belongs to the SIS family. PHI subfamily.

This is an uncharacterized protein from Archaeoglobus fulgidus (strain ATCC 49558 / DSM 4304 / JCM 9628 / NBRC 100126 / VC-16).